A 322-amino-acid polypeptide reads, in one-letter code: TATA box-binding protein-associated factor RNA polymerase I subunit D (322 aa).

2 disordered regions span residues 1–70 and 82–116; these read MAQS…SIEP and FKKK…RITR. Ser23 carries the phosphoserine modification. The span at 82-107 shows a compositional bias: basic residues; sequence FKKKKRKKRKKRKYEPKLRPRGRPRG. Position 137 is a phosphoserine (Ser137). Positions 198 to 219 are disordered; that stretch reads YMDDDGSLSPIEEPLTEDEATN. A Phosphoserine modification is found at Ser232. Residues 257-267 show a composition bias toward basic and acidic residues; that stretch reads FSKKAKDATHR. Residues 257–276 form a disordered region; it reads FSKKAKDATHREKGHRRTLK.

Component of the transcription factor SL1/TIF-IB complex, composed of TBP and at least TAF1A, TAF1B, TAF1C and TAF1D. Interacts with UBTF.

It is found in the nucleus. Component of the transcription factor SL1/TIF-IB complex, which is involved in the assembly of the PIC (preinitiation complex) during RNA polymerase I-dependent transcription. The rate of PIC formation probably is primarily dependent on the rate of association of SL1/TIF-IB with the rDNA promoter. SL1/TIF-IB is involved in stabilization of nucleolar transcription factor 1/UBTF on rDNA. Formation of SL1/TIF-IB excludes the association of TBP with TFIID subunits. The sequence is that of TATA box-binding protein-associated factor RNA polymerase I subunit D (Taf1d) from Mus musculus (Mouse).